A 369-amino-acid chain; its full sequence is Queuine tRNA-ribosyltransferase (369 aa).

Asp89 acts as the Proton acceptor in catalysis. Residues 89 to 93 (DSGGF), Asp142, Gln184, and Gly211 contribute to the substrate site. Positions 242 to 248 (GGGSPEL) are RNA binding. The active-site Nucleophile is Asp261. Residues 266-270 (TRIAR) form an RNA binding; important for wobble base 34 recognition region. 4 residues coordinate Zn(2+): Cys299, Cys301, Cys304, and His330.

This sequence belongs to the queuine tRNA-ribosyltransferase family. Homodimer. Within each dimer, one monomer is responsible for RNA recognition and catalysis, while the other monomer binds to the replacement base PreQ1. Zn(2+) serves as cofactor.

It carries out the reaction 7-aminomethyl-7-carbaguanine + guanosine(34) in tRNA = 7-aminomethyl-7-carbaguanosine(34) in tRNA + guanine. It functions in the pathway tRNA modification; tRNA-queuosine biosynthesis. Functionally, catalyzes the base-exchange of a guanine (G) residue with the queuine precursor 7-aminomethyl-7-deazaguanine (PreQ1) at position 34 (anticodon wobble position) in tRNAs with GU(N) anticodons (tRNA-Asp, -Asn, -His and -Tyr). Catalysis occurs through a double-displacement mechanism. The nucleophile active site attacks the C1' of nucleotide 34 to detach the guanine base from the RNA, forming a covalent enzyme-RNA intermediate. The proton acceptor active site deprotonates the incoming PreQ1, allowing a nucleophilic attack on the C1' of the ribose to form the product. After dissociation, two additional enzymatic reactions on the tRNA convert PreQ1 to queuine (Q), resulting in the hypermodified nucleoside queuosine (7-(((4,5-cis-dihydroxy-2-cyclopenten-1-yl)amino)methyl)-7-deazaguanosine). This is Queuine tRNA-ribosyltransferase from Thermotoga sp. (strain RQ2).